The primary structure comprises 207 residues: Guanylate kinase (207 aa).

Residues 10–187 (GFFIVLSAAS…AVERLQVIYQ (178 aa)) form the Guanylate kinase-like domain. Residue 17-24 (AASGTGKT) participates in ATP binding.

It belongs to the guanylate kinase family.

It is found in the cytoplasm. It catalyses the reaction GMP + ATP = GDP + ADP. Functionally, essential for recycling GMP and indirectly, cGMP. The chain is Guanylate kinase from Syntrophus aciditrophicus (strain SB).